The sequence spans 413 residues: Elongation factor 1-alpha (413 aa).

The 207-residue stretch at 5–211 (KTHMNLAFIG…DALDEPDKPV (207 aa)) folds into the tr-type G domain. The tract at residues 14 to 21 (GHVDHGKS) is G1. 14-21 (GHVDHGKS) serves as a coordination point for GTP. Ser-21 serves as a coordination point for Mg(2+). The interval 60-64 (GVTID) is G2. Residues 81-84 (DCPG) form a G3 region. GTP is bound by residues 81 to 85 (DCPGH) and 136 to 139 (NKMD). The segment at 136-139 (NKMD) is G4. The interval 175–177 (SAF) is G5.

It belongs to the TRAFAC class translation factor GTPase superfamily. Classic translation factor GTPase family. EF-Tu/EF-1A subfamily.

It localises to the cytoplasm. The catalysed reaction is GTP + H2O = GDP + phosphate + H(+). GTP hydrolase that promotes the GTP-dependent binding of aminoacyl-tRNA to the A-site of ribosomes during protein biosynthesis. The chain is Elongation factor 1-alpha from Methanosphaera stadtmanae (strain ATCC 43021 / DSM 3091 / JCM 11832 / MCB-3).